Here is a 280-residue protein sequence, read N- to C-terminus: Chlorophyll a-b binding protein CP26, chloroplastic (280 aa).

The transit peptide at 1 to 48 directs the protein to the chloroplast; that stretch reads MASLGVSEMLGTPLNFRAVSRSSAPLASSPSTFKTVALFSKKKPAPAK. A chlorophyll b-binding site is contributed by F70. Chlorophyll a is bound by residues Y95, E114, and H117. A run of 2 helical transmembrane segments spans residues 110–130 and 167–187; these read YQAF…GFII and IPIN…GAEY. Chlorophyll b is bound by residues R119, I167, E186, and R189. Chlorophyll a contacts are provided by K224, E225, N228, R230, Q242, and H257. A helical transmembrane segment spans residues 231 to 251; it reads LAMFAMLGFFIQAYVTGEGPV.

Belongs to the light-harvesting chlorophyll a/b-binding (LHC) protein family. As to quaternary structure, forms heterotrimers with LHCB3. The LHC complex consists of chlorophyll a-b binding proteins. Binds at least 14 chlorophylls (8 Chl-a and 6 Chl-b) and carotenoids such as lutein and neoxanthin. is required as a cofactor. In terms of processing, photoregulated by reversible phosphorylation of its threonine residues.

It is found in the plastid. The protein resides in the chloroplast thylakoid membrane. Functionally, the light-harvesting complex (LHC) functions as a light receptor, it captures and delivers excitation energy to photosystems with which it is closely associated. This chain is Chlorophyll a-b binding protein CP26, chloroplastic (LHCB5), found in Arabidopsis thaliana (Mouse-ear cress).